The sequence spans 274 residues: Type II restriction enzyme HgiEI (274 aa).

This sequence belongs to the TdeIII type II restriction endonuclease family.

It catalyses the reaction Endonucleolytic cleavage of DNA to give specific double-stranded fragments with terminal 5'-phosphates.. Functionally, a P subtype restriction enzyme that recognizes the double-stranded sequence 5'-GGWCC-3' and cleaves after G-1. This system is more active than isoschizomeric RM.HgiBI. In Herpetosiphon aurantiacus (Herpetosiphon giganteus), this protein is Type II restriction enzyme HgiEI.